The primary structure comprises 550 residues: Nucleoside hydrolase 4 (550 aa).

The protein belongs to the IUNH family.

The protein localises to the cytoplasm. Functionally, may be involved in the degradation of nucleosides. The polypeptide is Nucleoside hydrolase 4 (Arabidopsis thaliana (Mouse-ear cress)).